The primary structure comprises 355 residues: Putative testis-specific Y-encoded-like protein 3 (355 aa).

The segment at 1-131 (MADKRAGTPE…GEEKQEVAAE (131 aa)) is disordered. The segment covering 93–128 (ASEKAEDANKEEGAIFKKEPAEEVEKQQEGEEKQEV) has biased composition (basic and acidic residues).

The protein belongs to the nucleosome assembly protein (NAP) family.

The polypeptide is Putative testis-specific Y-encoded-like protein 3 (TSPY26P) (Homo sapiens (Human)).